A 341-amino-acid chain; its full sequence is N-acetyl-gamma-glutamyl-phosphate reductase (341 aa).

Residue Cys147 is part of the active site.

The protein belongs to the NAGSA dehydrogenase family. Type 1 subfamily.

Its subcellular location is the cytoplasm. It carries out the reaction N-acetyl-L-glutamate 5-semialdehyde + phosphate + NADP(+) = N-acetyl-L-glutamyl 5-phosphate + NADPH + H(+). Its pathway is amino-acid biosynthesis; L-arginine biosynthesis; N(2)-acetyl-L-ornithine from L-glutamate: step 3/4. Catalyzes the NADPH-dependent reduction of N-acetyl-5-glutamyl phosphate to yield N-acetyl-L-glutamate 5-semialdehyde. The protein is N-acetyl-gamma-glutamyl-phosphate reductase of Dehalococcoides mccartyi (strain ATCC BAA-2100 / JCM 16839 / KCTC 5957 / BAV1).